The sequence spans 131 residues: MAFLPKFDAGGLVTCVTTDAATGDVLMVAHMNDEALRRTVATGEAWYFSRSRNALWRKGESSGQTQRVIEMRTDCDQDAVWLRVEQTGAACHTGRRSCFYRRVERTEADGGARLVFVDADRLFDPDAVYRK.

Asp74 is a Mg(2+) binding site. Cys75 contacts Zn(2+). Residues Asp76 and Asp78 each coordinate Mg(2+). Zn(2+)-binding residues include Cys91 and Cys98.

This sequence belongs to the PRA-CH family. Homodimer. Requires Mg(2+) as cofactor. Zn(2+) is required as a cofactor.

It localises to the cytoplasm. The catalysed reaction is 1-(5-phospho-beta-D-ribosyl)-5'-AMP + H2O = 1-(5-phospho-beta-D-ribosyl)-5-[(5-phospho-beta-D-ribosylamino)methylideneamino]imidazole-4-carboxamide. It participates in amino-acid biosynthesis; L-histidine biosynthesis; L-histidine from 5-phospho-alpha-D-ribose 1-diphosphate: step 3/9. Its function is as follows. Catalyzes the hydrolysis of the adenine ring of phosphoribosyl-AMP. The polypeptide is Phosphoribosyl-AMP cyclohydrolase (Bradyrhizobium sp. (strain BTAi1 / ATCC BAA-1182)).